A 210-amino-acid polypeptide reads, in one-letter code: Glutathione S-transferase P (210 aa).

Residues 2–81 (PPYTVVYFPV…HLGRTLGLYG (80 aa)) form the GST N-terminal domain. Phosphotyrosine; by EGFR is present on Tyr-4. Glutathione is bound by residues Tyr-8, Arg-14, Trp-39, Lys-45, and 52-53 (QL). Thr-62 bears the Phosphothreonine mark. Residue 65–66 (QS) coordinates glutathione. The GST C-terminal domain maps to 83-204 (DQREAALVDM…ASPEHVNLPI (122 aa)). Residues Lys-103 and Lys-116 each carry the N6-succinyllysine modification. Lys-128 bears the N6-acetyllysine mark.

The protein belongs to the GST superfamily. Pi family. As to quaternary structure, homodimer. Interacts with CDK5.

Its subcellular location is the cytoplasm. It is found in the mitochondrion. It localises to the nucleus. The enzyme catalyses RX + glutathione = an S-substituted glutathione + a halide anion + H(+). The catalysed reaction is prostaglandin J2 + glutathione = prostaglandin J2-S-(R)-glutathione. It carries out the reaction prostaglandin J2 + glutathione = prostaglandin J2-S-(S)-glutathione. It catalyses the reaction prostaglandin A2 + glutathione = prostaglandin A2-S-(S)-glutathione. The enzyme catalyses 11(S)-hydroxy-14(S),15(S)-epoxy-(5Z,8Z,12E)-eicosatrienoate + glutathione = (11S,15S)-dihydroxy-14(R)-S-glutathionyl-(5Z,8Z,12E)-eicosatrienoate. Its function is as follows. Conjugation of reduced glutathione to a wide number of exogenous and endogenous hydrophobic electrophiles. Involved in the formation of glutathione conjugates of both prostaglandin A2 (PGA2) and prostaglandin J2 (PGJ2). Participates in the formation of novel hepoxilin regioisomers. Negatively regulates CDK5 activity via p25/p35 translocation to prevent neurodegeneration. This Pongo abelii (Sumatran orangutan) protein is Glutathione S-transferase P (GSTP1).